Reading from the N-terminus, the 341-residue chain is Putative casein kinase I C03C10.2 (341 aa).

One can recognise a Protein kinase domain in the interval 50 to 326 (WSIEGVIGNG…KCLYSPKSLL (277 aa)). ATP-binding positions include 56–64 (IGNGGYGQI) and K79. Catalysis depends on D173, which acts as the Proton acceptor.

This sequence belongs to the protein kinase superfamily. CK1 Ser/Thr protein kinase family. Casein kinase I subfamily.

The catalysed reaction is L-seryl-[protein] + ATP = O-phospho-L-seryl-[protein] + ADP + H(+). The enzyme catalyses L-threonyl-[protein] + ATP = O-phospho-L-threonyl-[protein] + ADP + H(+). The chain is Putative casein kinase I C03C10.2 from Caenorhabditis elegans.